Reading from the N-terminus, the 199-residue chain is Recombination protein RecR (199 aa).

Residues 58 to 73 form a C4-type zinc finger; it reads CLNCGNIGTSDICDIC. The Toprim domain maps to 81–176; that stretch reads GEICVVEDVA…AVTSLAQGVP (96 aa).

Belongs to the RecR family.

Its function is as follows. May play a role in DNA repair. It seems to be involved in an RecBC-independent recombinational process of DNA repair. It may act with RecF and RecO. The polypeptide is Recombination protein RecR (Dinoroseobacter shibae (strain DSM 16493 / NCIMB 14021 / DFL 12)).